The following is a 626-amino-acid chain: Chaperone protein DnaK (626 aa).

Threonine 197 carries the phosphothreonine; by autocatalysis modification. Over residues 598-612 the composition is skewed to low complexity; sequence AQGEQGQAAQPQAET. Residues 598–626 are disordered; sequence AQGEQGQAAQPQAETQGDDVQDVEFEEVK. The span at 613 to 626 shows a compositional bias: acidic residues; that stretch reads QGDDVQDVEFEEVK.

This sequence belongs to the heat shock protein 70 family.

Functionally, acts as a chaperone. This chain is Chaperone protein DnaK, found in Flavobacterium psychrophilum (strain ATCC 49511 / DSM 21280 / CIP 103535 / JIP02/86).